The primary structure comprises 527 residues: NAD(P)H-quinone oxidoreductase chain 4 1 (527 aa).

The next 14 helical transmembrane spans lie at 5 to 25 (FPWL…LPII), 35 to 55 (WYSL…FCTG), 90 to 110 (LIIL…PVSF), 112 to 132 (PKLF…VFAV), 136 to 156 (LLFF…LSIW), 168 to 188 (FILY…TMAF), 211 to 231 (LLLY…FPLH), 242 to 262 (TAPA…YALL), 274 to 294 (AVFA…AALT), 310 to 330 (ISHM…GLSG), 331 to 351 (AVLQ…LVGA), 386 to 406 (LALP…GFAT), 416 to 436 (VLVI…LLSM), and 463 to 483 (VFII…PKIV).

This sequence belongs to the complex I subunit 4 family.

It is found in the cellular thylakoid membrane. The catalysed reaction is a plastoquinone + NADH + (n+1) H(+)(in) = a plastoquinol + NAD(+) + n H(+)(out). It catalyses the reaction a plastoquinone + NADPH + (n+1) H(+)(in) = a plastoquinol + NADP(+) + n H(+)(out). In terms of biological role, NDH-1 shuttles electrons from NAD(P)H, via FMN and iron-sulfur (Fe-S) centers, to quinones in the respiratory chain. The immediate electron acceptor for the enzyme in this species is believed to be plastoquinone. Couples the redox reaction to proton translocation (for every two electrons transferred, four hydrogen ions are translocated across the cytoplasmic membrane), and thus conserves the redox energy in a proton gradient. The polypeptide is NAD(P)H-quinone oxidoreductase chain 4 1 (Trichodesmium erythraeum (strain IMS101)).